The sequence spans 536 residues: uncharacterized protein (536 aa).

Disordered stretches follow at residues 1–76 and 204–237; these read MSFT…SPAS and NWNS…SNKS. Composition is skewed to low complexity over residues 7-76 and 204-234; these read TSSV…SPAS and NWNS…PSKS. Residues 247-267 traverse the membrane as a helical segment; it reads CSVAIPVGVVLILIGLGIFLW. 2 disordered regions span residues 287–354 and 373–536; these read YGFN…LLGG and DASD…LNLF. Positions 290 to 326 are enriched in polar residues; that stretch reads NPNQPSNFRSPNRAPSTNNRYRGWNGSPTPAAGNNTN. Positions 327–350 are enriched in low complexity; that stretch reads GRPVAPRPSAGAGGANPPAASQPG. Residues 351 to 371 form a helical membrane-spanning segment; that stretch reads LLGGSSNSAGPIAAATAAGVG. The segment covering 403 to 424 has biased composition (polar residues); sequence SASNEAEATMPPSNGSNFSEGL. Positions 430–454 are enriched in low complexity; it reads ESGPAVGAAGAAAEAAEHSGSGSDS. Over residues 480–509 the composition is skewed to polar residues; sequence SYGSRAALSSRSQSNLLSPTSTGASNQPNY. Residues 517-527 show a composition bias toward low complexity; the sequence is SSSNVSIPRSS.

The protein localises to the membrane. This is an uncharacterized protein from Schizosaccharomyces pombe (strain 972 / ATCC 24843) (Fission yeast).